The following is a 157-amino-acid chain: uncharacterized protein (157 aa).

The protein belongs to the mimivirus L242/L243 family.

This is an uncharacterized protein from Acanthamoeba polyphaga (Amoeba).